Consider the following 277-residue polypeptide: Caspase-6 (277 aa).

The propeptide occupies 1–5; that stretch reads MTETD. The tri-arginine exosite stretch occupies residues 25–27; it reads KRR. Residue Ser-62 is modified to Phosphoserine. His-104 is a catalytic residue. The interval 108-125 is 130's region; that stretch reads NHIYAYDAKIEIQTLTGL. Cys-146 is a catalytic residue. Positions 163–176 are excised as a propeptide; sequence HQTDKLDDNVTQVD. Ser-240 carries the phosphoserine modification. S-palmitoyl cysteine attachment occurs at residues Cys-247 and Cys-260.

This sequence belongs to the peptidase C14A family. As to quaternary structure, heterotetramer that consists of two anti-parallel arranged heterodimers, each one formed by a 18 kDa (p18) and a 11 kDa (p11) subunits. Interacts with BIRC6/bruce. Interacts with RIPK3. In terms of assembly, heterotetramer that consists of two anti-parallel arranged heterodimers, each one formed by a 18 kDa (Caspase-6 subunit p18) and a 11 kDa (Caspase-6 subunit p11) subunit. In terms of processing, phosphorylated by NUAK1; phosphorylation inhibits self-activation. Phosphorylation at Ser-240 by AMP-activated protein kinase (PRKAA1 or PRKAA2) inhibits autocleavage, preventing caspase activation, thereby preventing hepatocyte apoptosis. Post-translationally, palmitoylation by ZDHHC17 blocks dimerization and subsequent activation, leading to inhibit the cysteine protease activity. Can be cleaved and activated by different caspases, depending on the context. Cleaved and activated by caspase-8 (CASP8) and subsequently by caspase-3 (CASP3). Can also undergo autoactivation by mediating autocleavage at Asp-162 and Asp-176, while it is not able to cleave its N-terminal disordered prodomain. Cleaved and activated by CASP1, possibly in the context of inflammation.

The protein resides in the cytoplasm. The protein localises to the nucleus. The enzyme catalyses Strict requirement for Asp at position P1 and has a preferred cleavage sequence of Val-Glu-His-Asp-|-.. With respect to regulation, during activation, the N-terminal disordered prodomain is removed by cleavage. Concomitantly, double cleavage gives rise to a large 18-kDa and a small 11-kDa subunit. The two large and two small subunits then assemble to form the active CASP6 complex. Can be cleaved and activated by different caspases, depending on the context. Cleaved and activated by caspase-8 (CASP8) and subsequently by caspase-3 (CASP3). Can also undergo autoactivation by mediating autocleavage at Asp-162 and Asp-176, while it is not able to cleave its N-terminal disordered prodomain. Intramolecular cleavage at Asp-176 is a prerequisite for CASP6 self-activation. Cleaved and activated by CASP1 in neurons, possibly in the context of inflammation. Phosphorylation at Ser-240 inhibits autocleavage, preventing caspase activation. Its function is as follows. Cysteine protease that plays essential roles in programmed cell death, axonal degeneration, development and innate immunity. Acts as a non-canonical executioner caspase during apoptosis: localizes in the nucleus and cleaves the nuclear structural protein NUMA1 and lamin A/LMNA thereby inducing nuclear shrinkage and fragmentation. Lamin-A/LMNA cleavage is required for chromatin condensation and nuclear disassembly during apoptotic execution. Acts as a regulator of liver damage by promoting hepatocyte apoptosis: in absence of phosphorylation by AMP-activated protein kinase (AMPK), catalyzes cleavage of BID, leading to cytochrome c release, thereby participating in nonalcoholic steatohepatitis. Cleaves PARK7/DJ-1 in cells undergoing apoptosis. Involved in intrinsic apoptosis by mediating cleavage of RIPK1. Furthermore, cleaves many transcription factors such as NF-kappa-B and cAMP response element-binding protein/CREBBP. Cleaves phospholipid scramblase proteins XKR4 and XKR9. In addition to apoptosis, involved in different forms of programmed cell death. Plays an essential role in defense against viruses by acting as a central mediator of the ZBP1-mediated pyroptosis, apoptosis, and necroptosis (PANoptosis), independently of its cysteine protease activity. PANoptosis is a unique inflammatory programmed cell death, which provides a molecular scaffold that allows the interactions and activation of machinery required for inflammasome/pyroptosis, apoptosis and necroptosis. Mechanistically, interacts with RIPK3 and enhances the interaction between RIPK3 and ZBP1, leading to ZBP1-mediated inflammasome activation and cell death. Plays an essential role in axon degeneration during axon pruning which is the remodeling of axons during neurogenesis but not apoptosis. Regulates B-cell programs both during early development and after antigen stimulation. The sequence is that of Caspase-6 from Rattus norvegicus (Rat).